The sequence spans 127 residues: MLSSLLAVFIGGGMGSVLRWAISMKMNPLNAHIPLGTLAVNLLGGFIIGLAIAIFSRLTHLDPTWKLLITTGFCGGLTTFSTFSLEVVYLLQDGRFMWALANMLLNLAGSLVMTLLAFMLVVWINGQ.

The next 4 membrane-spanning stretches (helical) occupy residues 2–22, 35–55, 68–88, and 104–124; these read LSSL…RWAI, LGTL…IAIF, LITT…LEVV, and LLNL…VVWI. Residues Gly-75 and Thr-78 each contribute to the Na(+) site.

It belongs to the fluoride channel Fluc/FEX (TC 1.A.43) family.

It localises to the cell inner membrane. The catalysed reaction is fluoride(in) = fluoride(out). With respect to regulation, na(+) is not transported, but it plays an essential structural role and its presence is essential for fluoride channel function. In terms of biological role, fluoride-specific ion channel. Important for reducing fluoride concentration in the cell, thus reducing its toxicity. This Serratia proteamaculans (strain 568) protein is Fluoride-specific ion channel FluC.